We begin with the raw amino-acid sequence, 249 residues long: 4-hydroxy-tetrahydrodipicolinate reductase (249 aa).

NAD(+)-binding positions include Gly8–Met13, Gly87–Thr89, and Ala111–Phe114. His143 serves as the catalytic Proton donor/acceptor. His144 contacts (S)-2,3,4,5-tetrahydrodipicolinate. Lys147 functions as the Proton donor in the catalytic mechanism. Position 153-154 (Gly153–Thr154) interacts with (S)-2,3,4,5-tetrahydrodipicolinate.

The protein belongs to the DapB family.

The protein resides in the cytoplasm. It carries out the reaction (S)-2,3,4,5-tetrahydrodipicolinate + NAD(+) + H2O = (2S,4S)-4-hydroxy-2,3,4,5-tetrahydrodipicolinate + NADH + H(+). The enzyme catalyses (S)-2,3,4,5-tetrahydrodipicolinate + NADP(+) + H2O = (2S,4S)-4-hydroxy-2,3,4,5-tetrahydrodipicolinate + NADPH + H(+). The protein operates within amino-acid biosynthesis; L-lysine biosynthesis via DAP pathway; (S)-tetrahydrodipicolinate from L-aspartate: step 4/4. Functionally, catalyzes the conversion of 4-hydroxy-tetrahydrodipicolinate (HTPA) to tetrahydrodipicolinate. The polypeptide is 4-hydroxy-tetrahydrodipicolinate reductase (Haloarcula marismortui (strain ATCC 43049 / DSM 3752 / JCM 8966 / VKM B-1809) (Halobacterium marismortui)).